Consider the following 381-residue polypeptide: Protein palisade (381 aa).

Residues 1 to 25 (MMMHSRNRSWTLTLLALGVVLATSA) form the signal peptide. 6 tandem repeats follow at residues 190–199 (PAAPAYEAPA), 200–209 (PPAPAYEAPA), 210–219 (PPAPAYEAPA), 220–229 (PAAPAYEAPA), 230–239 (PAAPAYEAPT), and 247–256 (PPAPAYEPPA). A 6 X 10 AA approximate tandem repeats of P-[AP]-A-P-A-Y-E-[AP]-P-[AT] region spans residues 190–256 (PAAPAYEAPA…PPAPAYEPPA (67 aa)). Disordered stretches follow at residues 236-270 (EAPT…AQPS) and 309-329 (TPTA…PSQN). Pro residues predominate over residues 311 to 321 (TAPPPPPPPAP).

Post-translationally, sulfated by pip; may be involved in embryo dorsal-ventral axis determination. Sulfation by pip may occur on covalently bound glycosaminoglycans. In terms of processing, may undergo both disulfide and non-disulfide cross-linking upon incorporation into the vitelline membrane. As to expression, present in the perivitelline space of stage 10 egg chambers and in the vitelline membrane adjacent to the oocyte in stage 13 and 14 egg chambers (at protein level).

It is found in the secreted. Its subcellular location is the extracellular space. The protein resides in the extracellular matrix. In terms of biological role, minor protein component of the vitelline membrane. Involved in vitelline membrane biogenesis during late stages of oogenesis. Required for efficient disulfide and non-disulfide cross-linking of several vitelline membrane components. This is Protein palisade from Drosophila melanogaster (Fruit fly).